The sequence spans 965 residues: UvrABC system protein A (965 aa).

32 to 39 is a binding site for ATP; the sequence is GLSGSGKS. Residues 254-281 form a C4-type zinc finger; it reads CPVCDYSLPELEPRLFSFNAPMGACPAC. ABC transporter domains lie at 311-588 and 608-937; these read WDRR…PRSL and PNAT…HFLA. 641–648 contacts ATP; it reads GVSGSGKS. A C4-type zinc finger spans residues 740-766; sequence CEACEGDGLIKVEMHFLPDVYVPCDVC.

It belongs to the ABC transporter superfamily. UvrA family. In terms of assembly, forms a heterotetramer with UvrB during the search for lesions.

The protein resides in the cytoplasm. In terms of biological role, the UvrABC repair system catalyzes the recognition and processing of DNA lesions. UvrA is an ATPase and a DNA-binding protein. A damage recognition complex composed of 2 UvrA and 2 UvrB subunits scans DNA for abnormalities. When the presence of a lesion has been verified by UvrB, the UvrA molecules dissociate. In Xylella fastidiosa (strain 9a5c), this protein is UvrABC system protein A.